The chain runs to 239 residues: Sugar fermentation stimulation protein homolog (239 aa).

It belongs to the SfsA family.

The chain is Sugar fermentation stimulation protein homolog from Methanobrevibacter smithii (strain ATCC 35061 / DSM 861 / OCM 144 / PS).